Consider the following 357-residue polypeptide: Protein XRP2 (357 aa).

Positions 1–11 (MGCFFSKRRKP) are enriched in basic residues. A disordered region spans residues 1-39 (MGCFFSKRRKPAQGGQQQGASQEPAAGEEKAPQYSWDQR). Gly-2 carries the N-myristoyl glycine lipid modification. Cys-3 is lipidated: S-palmitoyl cysteine. Positions 12-25 (AQGGQQQGASQEPA) are enriched in low complexity. Residues 32 to 186 (PQYSWDQRAK…TWSNIHDFTP (155 aa)) form the C-CAP/cofactor C-like domain. Residues 105–106 (GS) and 122–125 (QQFR) contribute to the GTP site.

The protein belongs to the TBCC family. Myristoylated on Gly-2; which may be required for membrane targeting. In terms of processing, palmitoylated on Cys-3; which may be required for plasma membrane targeting.

Its subcellular location is the cell membrane. Functionally, acts as a GTPase-activating protein (GAP) for tubulin in concert with tubulin-specific chaperone C, but does not enhance tubulin heterodimerization. Acts as a GTPase-activating protein. May act as guanine nucleotide dissociation inhibitor towards ADP-ribosylation factor-like proteins. This is Protein XRP2 (RP2) from Gallus gallus (Chicken).